Consider the following 1087-residue polypeptide: Transcription factor AP2-Z (1087 aa).

The AP2 DNA-binding region spans 586–682 (GRVYKVIVRG…IKYNSVPDSL (97 aa)).

Belongs to the AP2/ERF transcription factor family. AP2 subfamily.

The protein resides in the nucleus. It is found in the chromosome. Transcription factor which binds the 5'-[TC][AC]TG[AT]AC[AG]-3' motif. During the mosquito vector stage, plays an essential role in the zygote for de novo transcription of genes required for ookinete formation. In Plasmodium berghei (strain Anka), this protein is Transcription factor AP2-Z.